We begin with the raw amino-acid sequence, 164 residues long: Large ribosomal subunit protein uL11 (164 aa).

It belongs to the universal ribosomal protein uL11 family. Part of the ribosomal stalk of the 50S ribosomal subunit. Interacts with L10 and the large rRNA to form the base of the stalk. L10 forms an elongated spine to which L12 dimers bind in a sequential fashion forming a multimeric L10(L12)X complex.

Forms part of the ribosomal stalk which helps the ribosome interact with GTP-bound translation factors. This chain is Large ribosomal subunit protein uL11, found in Pyrococcus abyssi (strain GE5 / Orsay).